The sequence spans 356 residues: Dual-specificity RNA methyltransferase RlmN (356 aa).

Glutamate 89 functions as the Proton acceptor in the catalytic mechanism. Positions 108 to 341 (KHARYTICVS…CTIRESKGLD (234 aa)) constitute a Radical SAM core domain. Cysteine 115 and cysteine 346 are joined by a disulfide. The [4Fe-4S] cluster site is built by cysteine 122, cysteine 126, and cysteine 129. S-adenosyl-L-methionine contacts are provided by residues 172–173 (GE), serine 204, 227–229 (SLH), and asparagine 303. Cysteine 346 serves as the catalytic S-methylcysteine intermediate.

Belongs to the radical SAM superfamily. RlmN family. Requires [4Fe-4S] cluster as cofactor.

Its subcellular location is the cytoplasm. It carries out the reaction adenosine(2503) in 23S rRNA + 2 reduced [2Fe-2S]-[ferredoxin] + 2 S-adenosyl-L-methionine = 2-methyladenosine(2503) in 23S rRNA + 5'-deoxyadenosine + L-methionine + 2 oxidized [2Fe-2S]-[ferredoxin] + S-adenosyl-L-homocysteine. It catalyses the reaction adenosine(37) in tRNA + 2 reduced [2Fe-2S]-[ferredoxin] + 2 S-adenosyl-L-methionine = 2-methyladenosine(37) in tRNA + 5'-deoxyadenosine + L-methionine + 2 oxidized [2Fe-2S]-[ferredoxin] + S-adenosyl-L-homocysteine. In terms of biological role, specifically methylates position 2 of adenine 2503 in 23S rRNA and position 2 of adenine 37 in tRNAs. m2A2503 modification seems to play a crucial role in the proofreading step occurring at the peptidyl transferase center and thus would serve to optimize ribosomal fidelity. In Campylobacter lari (strain RM2100 / D67 / ATCC BAA-1060), this protein is Dual-specificity RNA methyltransferase RlmN.